The following is a 140-amino-acid chain: Putative transmembrane protein 49 (140 aa).

Helical transmembrane passes span 23 to 43 (LIMS…IGGV) and 93 to 110 (IAVH…RYMY).

It is found in the host membrane. The protein is Putative transmembrane protein 49 (SIFV0049) of Saccharolobus islandicus (Sulfolobus islandicus).